The sequence spans 1097 residues: Transmembrane protein 132D (1097 aa).

The first 30 residues, 1–30 (MCPSEMGTLWYLWSPVLISLAALFSKVTEG), serve as a signal peptide directing secretion. The Extracellular portion of the chain corresponds to 31–913 (RGILESIQRF…PDQAAKGLSD (883 aa)). A compositionally biased stretch (basic and acidic residues) spans 233–245 (DERGDCAKEDSRK). Disordered stretches follow at residues 233-263 (DERGDCAKEDSRKSGGAPAGHNDVDESSPPL) and 885-906 (SFPDQVDLPGSNVGTEEHDPDQ). The helical transmembrane segment at 914–934 (LEIGMYALLGVFCLAILVFLI) threads the bilayer. Over 935–1097 (NCVTFALKYR…SCMERLHEHV (163 aa)) the chain is Cytoplasmic. A disordered region spans residues 1021-1042 (MLTDDKEQKSEPPTSPTSKRKR).

The protein belongs to the TMEM132 family. In terms of tissue distribution, expressed in mature oligodendrocytes in the brain.

The protein resides in the membrane. Functionally, regulates neuronal morphology via inhibition of the WAVE regulatory complex (WCR), a complex that controls F-actin cytoskeletal dynamics. This is Transmembrane protein 132D (Tmem132d) from Rattus norvegicus (Rat).